The sequence spans 612 residues: UvrABC system protein C (612 aa).

The GIY-YIG domain maps to T20 to I98. The UVR domain maps to S208–L243.

The protein belongs to the UvrC family. As to quaternary structure, interacts with UvrB in an incision complex.

The protein resides in the cytoplasm. Functionally, the UvrABC repair system catalyzes the recognition and processing of DNA lesions. UvrC both incises the 5' and 3' sides of the lesion. The N-terminal half is responsible for the 3' incision and the C-terminal half is responsible for the 5' incision. The sequence is that of UvrABC system protein C from Francisella tularensis subsp. holarctica (strain LVS).